Here is a 418-residue protein sequence, read N- to C-terminus: Bifunctional protein GlmU (418 aa).

Residues methionine 1–arginine 236 form a pyrophosphorylase region. UDP-N-acetyl-alpha-D-glucosamine contacts are provided by residues leucine 7 to glycine 10, lysine 21, glutamine 74, glycine 79 to threonine 80, tyrosine 102 to aspartate 104, glycine 141, glutamate 155, asparagine 170, and asparagine 234. Aspartate 104 provides a ligand contact to Mg(2+). Asparagine 234 is a Mg(2+) binding site. Positions valine 237–alanine 257 are linker. The segment at glycine 258–glutamine 418 is N-acetyltransferase. UDP-N-acetyl-alpha-D-glucosamine is bound by residues arginine 339 and lysine 357. Histidine 369 serves as the catalytic Proton acceptor. Tyrosine 372 contacts UDP-N-acetyl-alpha-D-glucosamine. Alanine 386 lines the acetyl-CoA pocket.

It in the N-terminal section; belongs to the N-acetylglucosamine-1-phosphate uridyltransferase family. The protein in the C-terminal section; belongs to the transferase hexapeptide repeat family. As to quaternary structure, homotrimer. The cofactor is Mg(2+).

It localises to the cytoplasm. The catalysed reaction is alpha-D-glucosamine 1-phosphate + acetyl-CoA = N-acetyl-alpha-D-glucosamine 1-phosphate + CoA + H(+). It carries out the reaction N-acetyl-alpha-D-glucosamine 1-phosphate + UTP + H(+) = UDP-N-acetyl-alpha-D-glucosamine + diphosphate. It participates in nucleotide-sugar biosynthesis; UDP-N-acetyl-alpha-D-glucosamine biosynthesis; N-acetyl-alpha-D-glucosamine 1-phosphate from alpha-D-glucosamine 6-phosphate (route II): step 2/2. It functions in the pathway nucleotide-sugar biosynthesis; UDP-N-acetyl-alpha-D-glucosamine biosynthesis; UDP-N-acetyl-alpha-D-glucosamine from N-acetyl-alpha-D-glucosamine 1-phosphate: step 1/1. The protein operates within bacterial outer membrane biogenesis; LPS lipid A biosynthesis. Functionally, catalyzes the last two sequential reactions in the de novo biosynthetic pathway for UDP-N-acetylglucosamine (UDP-GlcNAc). The C-terminal domain catalyzes the transfer of acetyl group from acetyl coenzyme A to glucosamine-1-phosphate (GlcN-1-P) to produce N-acetylglucosamine-1-phosphate (GlcNAc-1-P), which is converted into UDP-GlcNAc by the transfer of uridine 5-monophosphate (from uridine 5-triphosphate), a reaction catalyzed by the N-terminal domain. This chain is Bifunctional protein GlmU, found in Cutibacterium acnes (strain DSM 16379 / KPA171202) (Propionibacterium acnes).